Consider the following 156-residue polypeptide: Ribosome-binding factor A (156 aa).

The segment at 124–156 (TRAEYAGEAQPYRLEEEPEGSGDEVPPPGGDQR) is disordered.

This sequence belongs to the RbfA family. As to quaternary structure, monomer. Binds 30S ribosomal subunits, but not 50S ribosomal subunits or 70S ribosomes.

It localises to the cytoplasm. Its function is as follows. One of several proteins that assist in the late maturation steps of the functional core of the 30S ribosomal subunit. Associates with free 30S ribosomal subunits (but not with 30S subunits that are part of 70S ribosomes or polysomes). Required for efficient processing of 16S rRNA. May interact with the 5'-terminal helix region of 16S rRNA. The polypeptide is Ribosome-binding factor A (Salinispora tropica (strain ATCC BAA-916 / DSM 44818 / JCM 13857 / NBRC 105044 / CNB-440)).